The primary structure comprises 212 residues: phospholipase A2 inhibitor and Ly6/PLAUR domain-containing protein (212 aa).

An N-terminal signal peptide occupies residues 1–24 (MILFRRHRTFLLAFTLLCTLLGLG). Residues 27-117 (LTCEVCKGSG…NSGSVPPPLN (91 aa)) enclose the UPAR/Ly6 domain. Intrachain disulfides connect cysteine 29-cysteine 53, cysteine 32-cysteine 39, cysteine 46-cysteine 74, cysteine 80-cysteine 101, cysteine 102-cysteine 107, cysteine 126-cysteine 152, and cysteine 145-cysteine 173.

The protein belongs to the CNF-like-inhibitor family.

The protein localises to the secreted. The sequence is that of phospholipase A2 inhibitor and Ly6/PLAUR domain-containing protein (Pinlyp) from Mus musculus (Mouse).